The sequence spans 417 residues: Type II methyltransferase M.KpnI (417 aa).

The protein belongs to the N(4)/N(6)-methyltransferase family.

The enzyme catalyses a 2'-deoxyadenosine in DNA + S-adenosyl-L-methionine = an N(6)-methyl-2'-deoxyadenosine in DNA + S-adenosyl-L-homocysteine + H(+). Its function is as follows. A beta subtype methylase, recognizes the double-stranded sequence 5'-GGTACC-3', methylates A-4 on both strands, and protects the DNA from cleavage by the KpnI endonuclease. This Klebsiella pneumoniae protein is Type II methyltransferase M.KpnI.